A 1104-amino-acid chain; its full sequence is Translation initiation factor IF-2 (1104 aa).

Disordered regions lie at residues 51 to 444 (SLLG…LAAQ) and 461 to 497 (LARP…RRRA). Composition is skewed to low complexity over residues 60–119 (AKPA…KPQA) and 127–164 (ATPK…AAKP). A compositionally biased stretch (pro residues) spans 189 to 202 (APTPRPTPARPTPR). Low complexity-rich tracts occupy residues 203-215 (PAGA…PTPG), 227-246 (GAPS…KPGA), 311-336 (STTG…PAGM), and 366-396 (PTKA…SFRP). Positions 406 to 420 (GRPDWDDSARLDALR) are enriched in basic and acidic residues. Residues 481–495 (MRKRKKETARQRQRR) show a composition bias toward basic residues. The region spanning 596 to 768 (RRPPVVTVMG…LLLVTEVEDL (173 aa)) is the tr-type G domain. A G1 region spans residues 605–612 (GHVDHGKT). Residue 605–612 (GHVDHGKT) coordinates GTP. The segment at 630–634 (GITQH) is G2. Residues 655-658 (DTPG) are G3. Residues 655–659 (DTPGH) and 709–712 (NKID) contribute to the GTP site. Positions 709–712 (NKID) are G4. Residues 745-747 (SAI) are G5.

Belongs to the TRAFAC class translation factor GTPase superfamily. Classic translation factor GTPase family. IF-2 subfamily.

It is found in the cytoplasm. One of the essential components for the initiation of protein synthesis. Protects formylmethionyl-tRNA from spontaneous hydrolysis and promotes its binding to the 30S ribosomal subunits. Also involved in the hydrolysis of GTP during the formation of the 70S ribosomal complex. The chain is Translation initiation factor IF-2 from Synechococcus sp. (strain CC9605).